Reading from the N-terminus, the 444-residue chain is MSQSYINVIGAGLAGSEAAYQIAERGIPVKLYEMRGVKSTPQHKTDNFAELVCSNSLRGDALTNAVGLLKEEMRRLGSVILESAEATRVPAGGALAVDRDGFSQMVTEKVVNHPLIEVVRDEITELPTDVITVVATGPLTSDALAEKIHALNNGDGFYFYDAAAPIIDVNTIDMSKVYLKSRYDKGEAAYLNAPMTKQEFMDFHEALVNAEEAPLNSFEKEKYFEGCMPIEVMAKRGIKTMLYGPMKPVGLEYPDDYTGPRDGEFKTPYAVVQLRQDNAAGSLYNIVGFQTHLKWGEQKRVFQMIPGLENAEFVRYGVMHRNSYMDSPNLLEQTYRSKKQPNLFFAGQMTGVEGYVESAASGLVAGINAARLFKEESEVIFPETTAIGSLAHYITHADSKHFQPMNVNFGIIKELEGERIRDKKARYEKIAERALADLEEFLTV.

10 to 15 (GAGLAG) contributes to the FAD binding site.

This sequence belongs to the MnmG family. TrmFO subfamily. It depends on FAD as a cofactor.

The protein localises to the cytoplasm. The catalysed reaction is uridine(54) in tRNA + (6R)-5,10-methylene-5,6,7,8-tetrahydrofolate + NADH + H(+) = 5-methyluridine(54) in tRNA + (6S)-5,6,7,8-tetrahydrofolate + NAD(+). It carries out the reaction uridine(54) in tRNA + (6R)-5,10-methylene-5,6,7,8-tetrahydrofolate + NADPH + H(+) = 5-methyluridine(54) in tRNA + (6S)-5,6,7,8-tetrahydrofolate + NADP(+). Catalyzes the folate-dependent formation of 5-methyl-uridine at position 54 (M-5-U54) in all tRNAs. This is Methylenetetrahydrofolate--tRNA-(uracil-5-)-methyltransferase TrmFO from Streptococcus pneumoniae (strain ATCC 700669 / Spain 23F-1).